A 261-amino-acid chain; its full sequence is Global transcriptional regulator CodY (261 aa).

A GAF domain region spans residues 1-159 (MPNLLEKTRK…ASTVVGIQLL (159 aa)). The segment at residues 207-226 (ASVIADRIGITRSVIVNALR) is a DNA-binding region (H-T-H motif).

The protein belongs to the CodY family.

The protein resides in the cytoplasm. Functionally, DNA-binding global transcriptional regulator which is involved in the adaptive response to starvation and acts by directly or indirectly controlling the expression of numerous genes in response to nutrient availability. During rapid exponential growth, CodY is highly active and represses genes whose products allow adaptation to nutrient depletion. The chain is Global transcriptional regulator CodY from Streptococcus agalactiae serotype III (strain NEM316).